Reading from the N-terminus, the 184-residue chain is Ribosome-recycling factor (184 aa).

This sequence belongs to the RRF family.

It is found in the cytoplasm. In terms of biological role, responsible for the release of ribosomes from messenger RNA at the termination of protein biosynthesis. May increase the efficiency of translation by recycling ribosomes from one round of translation to another. In Clostridium botulinum (strain Langeland / NCTC 10281 / Type F), this protein is Ribosome-recycling factor.